The primary structure comprises 1111 residues: Receptor-type guanylate cyclase gcy-14 (1111 aa).

A signal peptide spans 1–14 (MCLFLLLFPYLASG). The Extracellular portion of the chain corresponds to 15-473 (QFLQTVKVGL…ECPPDFVKEY (459 aa)). N-linked (GlcNAc...) asparagine glycosylation is found at Asn-65, Asn-130, Asn-318, Asn-340, Asn-365, and Asn-379. A helical membrane pass occupies residues 474-494 (LVYTIIAAVIVVLALLAGCAG). One can recognise a Protein kinase domain in the interval 482 to 817 (VIVVLALLAG…KSNLMDHVFN (336 aa)). ATP is bound by residues 488–496 (LLAGCAGLL) and Lys-545. Residues 495–1111 (LLYTMQMKRK…DFNNGNECVS (617 aa)) are Cytoplasmic-facing. In terms of domain architecture, Guanylate cyclase spans 875–1005 (TIFFSDVVQF…DAVNTASRME (131 aa)). Positions 1061-1082 (SAQAPREKTPEPPRRQSVRSIS) are disordered. The segment covering 1065-1074 (PREKTPEPPR) has biased composition (basic and acidic residues).

Belongs to the adenylyl cyclase class-4/guanylyl cyclase family. Homodimer. As to expression, expressed asymmetrically in ASEL sensory neuron.

The protein resides in the cell membrane. Its subcellular location is the cell projection. It localises to the cilium. The catalysed reaction is GTP = 3',5'-cyclic GMP + diphosphate. Functionally, guanylate cyclase involved in the production of the second messenger cGMP. Regulates chemotaxis responses toward Na(1+) and Li(1+) salt ions and alkaline pH in ASE left (ASEL) sensory neuron. Directly senses environmental alkalinity in ASEL neuron which probably leads to the activation of cGMP-gated cation channel tax2/tax4. The polypeptide is Receptor-type guanylate cyclase gcy-14 (Caenorhabditis elegans).